The sequence spans 341 residues: N-acetyl-gamma-glutamyl-phosphate reductase (341 aa).

The active site involves cysteine 149.

It belongs to the NAGSA dehydrogenase family. Type 1 subfamily.

It localises to the cytoplasm. It carries out the reaction N-acetyl-L-glutamate 5-semialdehyde + phosphate + NADP(+) = N-acetyl-L-glutamyl 5-phosphate + NADPH + H(+). It functions in the pathway amino-acid biosynthesis; L-arginine biosynthesis; N(2)-acetyl-L-ornithine from L-glutamate: step 3/4. Catalyzes the NADPH-dependent reduction of N-acetyl-5-glutamyl phosphate to yield N-acetyl-L-glutamate 5-semialdehyde. This Methanocaldococcus jannaschii (strain ATCC 43067 / DSM 2661 / JAL-1 / JCM 10045 / NBRC 100440) (Methanococcus jannaschii) protein is N-acetyl-gamma-glutamyl-phosphate reductase.